The sequence spans 3414 residues: Genome polyprotein (3414 aa).

The tract at residues 1–30 (MVKKAILKGKGGGPPRRVSKETATKTRQPR) is disordered. Residues 1–98 (MVKKAILKGK…LQKRGKRRSA (98 aa)) are Cytoplasmic-facing. A propeptide spans 97–117 (SATDWMSWLLVITLLGMTIAA) (ER anchor for the capsid protein C, removed in mature form by serine protease NS3). A helical transmembrane segment spans residues 99 to 119 (TDWMSWLLVITLLGMTIAATV). Residues 120–242 (RKERDGSTVI…HLTRVEGWVW (123 aa)) lie on the Extracellular side of the membrane. N-linked (GlcNAc...) asparagine; by host glycosylation occurs at N144. Residues 243–260 (KNRLLALAMVTVVWLTLE) traverse the membrane as a helical segment. Residue S261 is a topological domain, cytoplasmic. A helical membrane pass occupies residues 262-280 (VVTRVAVLVVLLCLAPVYA). Residues 281 to 727 (SRCTHLENRD…HTVLGGAFNS (447 aa)) lie on the Extracellular side of the membrane. 6 cysteine pairs are disulfide-bonded: C283–C310, C340–C396, C340–C401, C354–C385, C372–C396, and C372–C401. The tract at residues 378-391 (DRGWGNHCGLFGKG) is fusion peptide. Residue N434 is glycosylated (N-linked (GlcNAc...) asparagine; by host). 2 cysteine pairs are disulfide-bonded: C466-C570 and C587-C618. Residues 728–748 (IFGGVGFLPKLLLGVALAWLG) form a helical membrane-spanning segment. Residues 749-755 (LNMRNPT) are Extracellular-facing. A helical transmembrane segment spans residues 756 to 776 (MSMSFLLAGVLVLAMTLGVGA). Residues 777–1132 (DVGCAVDTER…RSMVVADNGE (356 aa)) lie on the Extracellular side of the membrane. 6 cysteine pairs are disulfide-bonded: C780–C791, C831–C920, C955–C1000, C1057–C1106, C1068–C1090, and C1089–C1093. 3 N-linked (GlcNAc...) asparagine; by host glycosylation sites follow: N861, N983, and N999. Residues 1133 to 1153 (LLSEGGVPGIVALFVVLEYII) form a helical membrane-spanning segment. At 1154–1158 (RRRPS) the chain is on the cytoplasmic side. A helical membrane pass occupies residues 1159-1179 (TGSTVVWGGIVVLALLVTGMV). Residues 1180–1187 (RMESLVRY) are Lumenal-facing. The helical transmembrane segment at 1188–1208 (VVAVGITFHLELGPEIVALML) threads the bilayer. Topologically, residues 1209–1293 (LQAVFELRVG…LLMALMTQQD (85 aa)) are cytoplasmic. The helical transmembrane segment at 1294–1314 (VVTVHHGLVCFLSAASACSIW) threads the bilayer. Residues 1315–1327 (RLLRGHREQKGLT) lie on the Lumenal side of the membrane. A helical membrane pass occupies residues 1328-1348 (WIVPLARLLGGEGSGIRLLAF). Over 1349–1359 (WELSAHRGRRS) the chain is Cytoplasmic. A helical membrane pass occupies residues 1360–1377 (FSEPLTVVGVMLTLASGM). The Lumenal segment spans residues 1378-1382 (MRHTS). The chain crosses the membrane as a helical span at residues 1383–1403 (QEALCALAVASFLLLMLVLGT). Residues 1404–1454 (RKMQLVAEWSGCVEWHPELVNEGGEVSLRVRQDAMGNFHLTELEKEERMMA) are Cytoplasmic-facing. The segment at 1410–1449 (AEWSGCVEWHPELVNEGGEVSLRVRQDAMGNFHLTELEKE) is interacts with and activates NS3 protease. Residues 1455–1475 (FWLIAGLAASAIHWSGIIGVM) constitute an intramembrane region (helical). Over 1476 to 2160 (GLWTLTKMLR…RMAERDAPEA (685 aa)) the chain is Cytoplasmic. The Peptidase S7 domain occupies 1490–1669 (SDLVFSGQGG…EAEKSRPNLP (180 aa)). Residues H1543, D1567, and S1627 each act as charge relay system; for serine protease NS3 activity in the active site. In terms of domain architecture, Helicase ATP-binding spans 1675–1831 (TGWTSKGQIT…ESNGAITSEE (157 aa)). An ATP-binding site is contributed by 1688–1695 (MHPGSGKT). Residues 1779 to 1782 (DEAH) carry the DEAH box motif. Residues 1841–2000 (DGFDWITEYE…TLRGPVATFY (160 aa)) form the Helicase C-terminal domain. K1883 bears the N6-acetyllysine; by host mark. The helical transmembrane segment at 2161–2181 (FLTMVEMMVLGLATLGVIWCF) threads the bilayer. The Lumenal segment spans residues 2182–2189 (VVRTSISR). The helical intramembrane region spans 2190-2210 (MMLGTLVLLASLLLLWAGGVG). A topological domain (lumenal) is located at residue Y2211. The chain crosses the membrane as a helical span at residues 2212–2232 (GNMAGVALIFYTLLTVLQPEA). Residues 2233–2244 (GKQRSSDDNKLA) lie on the Cytoplasmic side of the membrane. Residues 2245–2265 (YFLLTLCSLAGLVAANEMGFL) traverse the membrane as a helical segment. Residues 2266 to 2299 (EKTKADLSTVLWSEREEPRPWSEWTNVDIQPARS) are Lumenal-facing. The segment at residues 2300–2320 (WGTYVLVVSLFTPYIIHQLQT) is an intramembrane region (helical). At 2321 to 2343 (KIQQLVNSAVASGAQAMRDLGGG) the chain is on the lumenal side. Residues 2344-2364 (APFFGVAGHVMTLGVVSLIGA) constitute an intramembrane region (helical). The Lumenal portion of the chain corresponds to 2365 to 2368 (TPTS). Residues 2369-2389 (LMVGVGLAALHLAIVVSGLEA) traverse the membrane as a helical segment. The Cytoplasmic segment spans residues 2390 to 2432 (ELTQRAHKVFFSAMVRNPMVDGDVINPFGEGEAKPALYERRMS). The chain crosses the membrane as a helical span at residues 2433–2453 (LVLAIVLCLMSVVMNRTVASI). Residues 2454 to 2477 (TEASAVGLAAAGQLLRPEADTLWT) lie on the Lumenal side of the membrane. A helical membrane pass occupies residues 2478–2498 (MPVACGMSGVVRGSLWGFLPL). Over 2499–3414 (GHRLWLRASG…WELRLESSII (916 aa)) the chain is Cytoplasmic. One can recognise an mRNA cap 0-1 NS5-type MT domain in the interval 2512-2776 (GGSEGDTLGD…ELDLGVGTRC (265 aa)). S2567 is an S-adenosyl-L-methionine binding site. A Phosphoserine modification is found at S2567. Catalysis depends on K2572, which acts as the For 2'-O-MTase activity. S-adenosyl-L-methionine is bound by residues G2597, W2598, T2615, I2616, D2642, and V2643. D2657 functions as the For 2'-O-MTase activity in the catalytic mechanism. S-adenosyl-L-methionine is bound at residue I2658. Residues K2694 and E2730 each act as for 2'-O-MTase activity in the active site. Residues 2730–2734 (EMYYS) form an interaction with host SCRIB region. Y2732 contributes to the S-adenosyl-L-methionine binding site. Residues E2950, H2954, C2959, and C2962 each contribute to the Zn(2+) site. In terms of domain architecture, RdRp catalytic spans 3040–3189 (GLFYADDTAG…RPLDDRFGKA (150 aa)). Zn(2+) is bound by residues H3224, C3240, and C3359.

The protein in the N-terminal section; belongs to the class I-like SAM-binding methyltransferase superfamily. mRNA cap 0-1 NS5-type methyltransferase family. Homodimer. Interacts (via N-terminus) with host EXOC1 (via C-terminus); this interaction results in EXOC1 degradation through the proteasome degradation pathway. In terms of assembly, forms heterodimers with envelope protein E in the endoplasmic reticulum and Golgi. As to quaternary structure, homodimer; in the endoplasmic reticulum and Golgi. Interacts with protein prM. Interacts with non-structural protein 1. Homodimer; Homohexamer when secreted. Interacts with envelope protein E. In terms of assembly, interacts (via N-terminus) with serine protease NS3. As to quaternary structure, forms a heterodimer with serine protease NS3. May form homooligomers. Forms a heterodimer with NS2B. Interacts with NS4B. Interacts with unphosphorylated RNA-directed RNA polymerase NS5; this interaction stimulates RNA-directed RNA polymerase NS5 guanylyltransferase activity. In terms of assembly, interacts with serine protease NS3. As to quaternary structure, homodimer. Interacts with host STAT2; this interaction inhibits the phosphorylation of the latter, and, when all viral proteins are present (polyprotein), targets STAT2 for degradation. Interacts with serine protease NS3. Interacts with host SCRIB; this interaction targets NS5 to the cell membrane periphery and nucleus, thereby allowing efficient host nuclear STAT1 inhibition. Specific enzymatic cleavages in vivo yield mature proteins. Cleavages in the lumen of endoplasmic reticulum are performed by host signal peptidase, whereas cleavages in the cytoplasmic side are performed by serine protease NS3. Signal cleavage at the 2K-4B site requires a prior NS3 protease-mediated cleavage at the 4A-2K site. Post-translationally, cleaved in post-Golgi vesicles by a host furin, releasing the mature small envelope protein M, and peptide pr. This cleavage is incomplete as up to 30% of viral particles still carry uncleaved prM. In terms of processing, N-glycosylated. N-glycosylated. The excreted form is glycosylated and this is required for efficient secretion of the protein from infected cells. Post-translationally, acetylated by host KAT5. Acetylation modulates NS3 RNA-binding and unwinding activities and plays an important positive role for viral replication. In terms of processing, phosphorylated on serines residues. This phosphorylation may trigger NS5 nuclear localization.

The protein resides in the virion. Its subcellular location is the host nucleus. It is found in the host cytoplasm. The protein localises to the host perinuclear region. It localises to the secreted. The protein resides in the virion membrane. Its subcellular location is the host endoplasmic reticulum membrane. It catalyses the reaction Selective hydrolysis of -Xaa-Xaa-|-Yaa- bonds in which each of the Xaa can be either Arg or Lys and Yaa can be either Ser or Ala.. The enzyme catalyses RNA(n) + a ribonucleoside 5'-triphosphate = RNA(n+1) + diphosphate. It carries out the reaction a ribonucleoside 5'-triphosphate + H2O = a ribonucleoside 5'-diphosphate + phosphate + H(+). The catalysed reaction is ATP + H2O = ADP + phosphate + H(+). It catalyses the reaction a 5'-end (5'-triphosphoguanosine)-ribonucleoside in mRNA + S-adenosyl-L-methionine = a 5'-end (N(7)-methyl 5'-triphosphoguanosine)-ribonucleoside in mRNA + S-adenosyl-L-homocysteine. The enzyme catalyses a 5'-end (N(7)-methyl 5'-triphosphoguanosine)-ribonucleoside in mRNA + S-adenosyl-L-methionine = a 5'-end (N(7)-methyl 5'-triphosphoguanosine)-(2'-O-methyl-ribonucleoside) in mRNA + S-adenosyl-L-homocysteine + H(+). Plays a role in virus budding by binding to the cell membrane and gathering the viral RNA into a nucleocapsid that forms the core of a mature virus particle. During virus entry, may induce genome penetration into the host cytoplasm after hemifusion induced by the surface proteins. Can migrate to the cell nucleus where it modulates host functions. Functionally, inhibits RNA silencing by interfering with host Dicer. In terms of biological role, prevents premature fusion activity of envelope proteins in trans-Golgi by binding to envelope protein E at pH6.0. After virion release in extracellular space, gets dissociated from E dimers. Its function is as follows. Acts as a chaperone for envelope protein E during intracellular virion assembly by masking and inactivating envelope protein E fusion peptide. prM is the only viral peptide matured by host furin in the trans-Golgi network probably to avoid catastrophic activation of the viral fusion activity in acidic Golgi compartment prior to virion release. prM-E cleavage is inefficient, and many virions are only partially matured. These uncleaved prM would play a role in immune evasion. May play a role in virus budding. Exerts cytotoxic effects by activating a mitochondrial apoptotic pathway through M ectodomain. May display a viroporin activity. Functionally, binds to host cell surface receptor and mediates fusion between viral and cellular membranes. Envelope protein is synthesized in the endoplasmic reticulum in the form of heterodimer with protein prM. They play a role in virion budding in the ER, and the newly formed immature particle is covered with 60 spikes composed of heterodimer between precursor prM and envelope protein E. The virion is transported to the Golgi apparatus where the low pH causes dissociation of PrM-E heterodimers and formation of E homodimers. prM-E cleavage is inefficient, and many virions are only partially matured. These uncleaved prM would play a role in immune evasion. In terms of biological role, involved in immune evasion, pathogenesis and viral replication. Once cleaved off the polyprotein, is targeted to three destinations: the viral replication cycle, the plasma membrane and the extracellular compartment. Essential for viral replication. Required for formation of the replication complex and recruitment of other non-structural proteins to the ER-derived membrane structures. Excreted as a hexameric lipoparticle that plays a role against host immune response. Antagonizing the complement function. Binds to the host macrophages and dendritic cells. Inhibits signal transduction originating from Toll-like receptor 3 (TLR3). Its function is as follows. Component of the viral RNA replication complex that functions in virion assembly and antagonizes the host immune response. Required cofactor for the serine protease function of NS3. May have membrane-destabilizing activity and form viroporins. Functionally, displays three enzymatic activities: serine protease, NTPase and RNA helicase. NS3 serine protease, in association with NS2B, performs its autocleavage and cleaves the polyprotein at dibasic sites in the cytoplasm: C-prM, NS2A-NS2B, NS2B-NS3, NS3-NS4A, NS4A-2K and NS4B-NS5. NS3 RNA helicase binds RNA and unwinds dsRNA in the 3' to 5' direction. In terms of biological role, regulates the ATPase activity of the NS3 helicase activity. NS4A allows NS3 helicase to conserve energy during unwinding. Its function is as follows. Functions as a signal peptide for NS4B and is required for the interferon antagonism activity of the latter. Induces the formation of ER-derived membrane vesicles where the viral replication takes place. Inhibits interferon (IFN)-induced host STAT1 phosphorylation and nuclear translocation, thereby preventing the establishment of cellular antiviral state by blocking the IFN-alpha/beta pathway. Inhibits STAT2 translocation in the nucleus after IFN-alpha treatment. Functionally, replicates the viral (+) and (-) genome, and performs the capping of genomes in the cytoplasm. NS5 methylates viral RNA cap at guanine N-7 and ribose 2'-O positions. Besides its role in genome replication, also prevents the establishment of cellular antiviral state by blocking the interferon-alpha/beta (IFN-alpha/beta) signaling pathway. Inhibits host TYK2 and STAT2 phosphorylation, thereby preventing activation of JAK-STAT signaling pathway. The protein is Genome polyprotein of Tick-borne encephalitis virus (strain Hypr) (TBEV).